We begin with the raw amino-acid sequence, 110 residues long: uncharacterized protein (110 aa).

Transmembrane regions (helical) follow at residues 6 to 26 (VSLY…IYNV) and 38 to 58 (TSGP…IIGP).

It localises to the membrane. This is an uncharacterized protein from Saccharomyces cerevisiae (strain ATCC 204508 / S288c) (Baker's yeast).